A 62-amino-acid chain; its full sequence is Photosystem II reaction center X protein (62 aa).

A helical transmembrane segment spans residues 26-46; the sequence is IASFFAAALLIVIPAATFLIF.

The protein belongs to the PsbX family. Type 2 subfamily. PSII consists of a core antenna complex that captures photons, and an electron transfer chain that converts photonic excitation into a charge separation. PSII forms dimeric complexes.

The protein resides in the cellular thylakoid membrane. Functionally, involved in the binding and/or turnover of quinones at the Q(B) site of Photosystem II. The sequence is that of Photosystem II reaction center X protein from Prochlorococcus marinus (strain MIT 9515).